Reading from the N-terminus, the 177-residue chain is Large ribosomal subunit protein uL6 (177 aa).

The protein belongs to the universal ribosomal protein uL6 family. Part of the 50S ribosomal subunit.

Its function is as follows. This protein binds to the 23S rRNA, and is important in its secondary structure. It is located near the subunit interface in the base of the L7/L12 stalk, and near the tRNA binding site of the peptidyltransferase center. This Rubrobacter xylanophilus (strain DSM 9941 / JCM 11954 / NBRC 16129 / PRD-1) protein is Large ribosomal subunit protein uL6.